A 112-amino-acid polypeptide reads, in one-letter code: Class I hydrophobin 17 (112 aa).

A signal peptide spans 1 to 19 (MYSQSMVLLAAAFASFVAA). 4 disulfide bridges follow: Cys-30–Cys-90, Cys-37–Cys-84, Cys-38–Cys-74, and Cys-91–Cys-104. A glycan (N-linked (GlcNAc...) asparagine) is linked at Asn-108.

It belongs to the fungal hydrophobin family. In terms of assembly, self-assembles to form functional amyloid fibrils called rodlets. Self-assembly into fibrillar rodlets occurs spontaneously at hydrophobic:hydrophilic interfaces and the rodlets further associate laterally to form amphipathic monolayers.

Its subcellular location is the secreted. It is found in the cell wall. In terms of biological role, aerial growth, conidiation, and dispersal of filamentous fungi in the environment rely upon a capability of their secreting small amphipathic proteins called hydrophobins (HPBs) with low sequence identity. Class I can self-assemble into an outermost layer of rodlet bundles on aerial cell surfaces, conferring cellular hydrophobicity that supports fungal growth, development and dispersal; whereas Class II form highly ordered films at water-air interfaces through intermolecular interactions but contribute nothing to the rodlet structure. Hydph17 is a class I hydrophobin involved in mycelial growth. The polypeptide is Class I hydrophobin 17 (Pleurotus ostreatus (strain PC15) (Oyster mushroom)).